Reading from the N-terminus, the 689-residue chain is Sodium-dependent phosphate transport protein 2B (689 aa).

Residues 1–41 form a disordered region; it reads MAPWPELGDAQPNPDKYLEGAAGQQPTAPDKSKETNKNNTE. Over 1-100 the chain is Cytoplasmic; sequence MAPWPELGDA…LCVFQGIGRL (100 aa). A helical transmembrane segment spans residues 101–121; the sequence is ILLLGFLYFFVCSLDILSSAF. The Extracellular portion of the chain corresponds to 122–135; sequence QLVGGKMAGQFFSN. The chain crosses the membrane as a helical span at residues 136-156; that stretch reads SSIMSNPLLGLVIGVLVTVLV. Topologically, residues 157-212 are cytoplasmic; the sequence is QSSSTSTSIVVSMVSSSLLTVRAAIPIIMGANIGTSITNTIVALMQVGDRSEFRRA. A helical transmembrane segment spans residues 213-233; that stretch reads FAGATVHDFFNWLSVLVLLPV. The Extracellular segment spans residues 234–362; the sequence is EVATHYLEII…FVNFHLPDLA (129 aa). Residues asparagine 294, asparagine 307, and asparagine 320 are each glycosylated (N-linked (GlcNAc...) asparagine). Cysteines 302 and 349 form a disulfide. The chain crosses the membrane as a helical span at residues 363-383; the sequence is VGTILLILSLLVLCGCLIMIV. Topologically, residues 384–407 are cytoplasmic; that stretch reads KILGSVLKGQVATVIKKTINTDFP. A helical membrane pass occupies residues 408–428; it reads FPFAWLTGYLAILVGAGMTFI. The Extracellular segment spans residues 429 to 485; it reads VQSSSVFTSALTPLIGIGVITIERAYPLTLGSNIGTTTTAILAALASPGNALRSSLQ. Residues 486–506 traverse the membrane as a helical segment; it reads IALCHFFFNISGILLWYPIPF. The Cytoplasmic portion of the chain corresponds to 507–525; sequence TRLPIRMAKGLGNISAKYR. The helical transmembrane segment at 526–546 threads the bilayer; the sequence is WFAVFYLIIFFFLIPLTVFGL. At 547 to 552 the chain is on the extracellular side; it reads SLAGWR. Residues 553 to 573 form a helical membrane-spanning segment; it reads VLVGVGVPVVFIIILVLCLRL. Residues 574-687 are Cytoplasmic-facing; it reads LQSRCPRVLP…PASDSKTECT (114 aa).

It belongs to the SLC34A transporter family.

It is found in the apical cell membrane. It catalyses the reaction 3 Na(+)(out) + phosphate(out) = 3 Na(+)(in) + phosphate(in). In terms of biological role, involved in actively transporting phosphate into cells via Na(+) cotransport. The polypeptide is Sodium-dependent phosphate transport protein 2B (SLC34A2) (Pongo abelii (Sumatran orangutan)).